The chain runs to 415 residues: Phosphoribosylamine--glycine ligase (415 aa).

The 204-residue stretch at 108 to 311 (KKIMEKYNIP…LMQHIIDLDE (204 aa)) folds into the ATP-grasp domain. An ATP-binding site is contributed by 134–191 (IENCELPVVVKKDGLAAGKGVIIADTIEAARSAIEIMYGDEEEGTVVFETFLEGEEFS). Positions 281 and 283 each coordinate Mg(2+).

The protein belongs to the GARS family. Mg(2+) serves as cofactor. It depends on Mn(2+) as a cofactor.

The enzyme catalyses 5-phospho-beta-D-ribosylamine + glycine + ATP = N(1)-(5-phospho-beta-D-ribosyl)glycinamide + ADP + phosphate + H(+). The protein operates within purine metabolism; IMP biosynthesis via de novo pathway; N(1)-(5-phospho-D-ribosyl)glycinamide from 5-phospho-alpha-D-ribose 1-diphosphate: step 2/2. This chain is Phosphoribosylamine--glycine ligase, found in Staphylococcus aureus (strain COL).